Here is a 430-residue protein sequence, read N- to C-terminus: MSIPDENIILEGSLKRCKKYKLFKTKWVEHYFVLHCRDRERNLFAIDEFKTSRKNDLKKRFKLEFVIRVESNLSVSDPSILCTAGGGHQEESMLNCIFGVGFRFENIVKDLYLVAKNDEEMTLWVNEICKLCKLHRQHDEGDSSHAAESSISGMSMSSQSLDMSIIEQQQYAENIPESKQYHRMHHFKSVISHNSLPSNPNYNNLPDPLESSRSETSSMYSSRRTEDDSVSYTSGPPVPPPRTRHTLNRFVKNGQVGRLHMIPASTSMGQVVKVEDAEDSSGETLKLDTPEQYPESVTSSEGFPVYERNGKTLIRRAPPPVDRSNKPKNLRGEEEAGTRYRNLSRNGVNENGNYSATFSSRTSNYQQSETSKRRNLDYFEPTQMIENSSLSTLAATSTRSPTPSDIEYISVDVDRTLAFKQMRRAAQSTD.

In terms of domain architecture, PH spans 7–133; sequence NIILEGSLKR…WVNEICKLCK (127 aa). Over residues 192–222 the composition is skewed to low complexity; that stretch reads SHNSLPSNPNYNNLPDPLESSRSETSSMYSS. Disordered regions lie at residues 192 to 246, 275 to 303, and 315 to 377; these read SHNS…TRHT, EDAE…SEGF, and RRAP…RNLD. A compositionally biased stretch (polar residues) spans 341 to 369; sequence RNLSRNGVNENGNYSATFSSRTSNYQQSE.

Interacts (via C-terminus) with sem-5 (probably via SH3 domain 2). Interacts with nicotinic acetylcholine receptor. In terms of processing, may be phosphorylated.

Its function is as follows. Adapter protein which modulates signaling mediated by several receptor tyrosine kinases. Plays a role in fluid homeostasis, probably downstream of receptor egl-15 and upstream of let-60/Ras. Involved in nicotinic acetylcholine receptor (nAChR)-mediated sensitivity to nicotine and levamisole and gamma-aminobutyric acid (GABA)receptor-mediated sensitivity to muscimol. Regulates synaptic levels of nAchR receptor subunit lev-1 and unc-38, and GABA receptor subunit unc-49 in the nerve cord, probably downstream of egl-15. Regulates motility. During the formation of neuromuscular junctions at the larval stage, down-regulates membrane protrusion from body wall muscles, probably downstream of egl-15. Promotes vulva induction and down-regulates fertility, probably downstream of receptor let-23. Down-regulates daf-2-mediated repression of dauer formation and positively regulates daf-2-mediated aging. May be involved in the recruitment of phosphatase ptp-2 to egl-15. The sequence is that of Multisubstrate adapter protein soc-1 from Caenorhabditis elegans.